The following is a 447-amino-acid chain: Ribosomal protein uS12 methylthiotransferase RimO (447 aa).

The MTTase N-terminal domain maps to 4–114; that stretch reads PKVGFVSLGC…VMEAVHEYVP (111 aa). Residues Cys-13, Cys-49, Cys-78, Cys-147, Cys-151, and Cys-154 each contribute to the [4Fe-4S] cluster site. In terms of domain architecture, Radical SAM core spans 133–370; that stretch reads LTPKHYAYLK…MQVQQQISAA (238 aa). Residues 373–443 form the TRAM domain; the sequence is QKRIGQTMTV…EYDLFAKLIK (71 aa).

Belongs to the methylthiotransferase family. RimO subfamily. [4Fe-4S] cluster is required as a cofactor.

Its subcellular location is the cytoplasm. It catalyses the reaction L-aspartate(89)-[ribosomal protein uS12]-hydrogen + (sulfur carrier)-SH + AH2 + 2 S-adenosyl-L-methionine = 3-methylsulfanyl-L-aspartate(89)-[ribosomal protein uS12]-hydrogen + (sulfur carrier)-H + 5'-deoxyadenosine + L-methionine + A + S-adenosyl-L-homocysteine + 2 H(+). Its function is as follows. Catalyzes the methylthiolation of an aspartic acid residue of ribosomal protein uS12. This is Ribosomal protein uS12 methylthiotransferase RimO from Acinetobacter baumannii (strain AB307-0294).